Here is a 77-residue protein sequence, read N- to C-terminus: Large ribosomal subunit protein bL31 (77 aa).

It belongs to the bacterial ribosomal protein bL31 family. Type A subfamily. Part of the 50S ribosomal subunit.

Functionally, binds the 23S rRNA. This is Large ribosomal subunit protein bL31 from Synechococcus elongatus (strain ATCC 33912 / PCC 7942 / FACHB-805) (Anacystis nidulans R2).